An 887-amino-acid polypeptide reads, in one-letter code: Semaphorin-6B (887 aa).

A signal peptide spans 1 to 26; it reads MWTPRAPPPRPALLFLLLLLLRVTHG. Topologically, residues 27-605 are extracellular; sequence LFPDEPPPLS…VSVNLLVTSS (579 aa). Residues 32 to 525 enclose the Sema domain; sequence PPPLSVAPRD…FPRCVVRVPV (494 aa). An N-linked (GlcNAc...) asparagine glycan is attached at Asn75. 2 cysteine pairs are disulfide-bonded: Cys117/Cys127 and Cys145/Cys154. N-linked (GlcNAc...) asparagine glycosylation is found at Asn156, Asn168, and Asn292. Disulfide bonds link Cys268–Cys379 and Cys293–Cys338. N-linked (GlcNAc...) asparagine glycans are attached at residues Asn387, Asn442, and Asn463. Cystine bridges form between Cys487–Cys519, Cys528–Cys546, Cys534–Cys580, and Cys538–Cys554. The helical transmembrane segment at 606 to 626 threads the bilayer; that stretch reads VAAFVVGAVVSGFSVGWFVGL. Residues 627–887 lie on the Cytoplasmic side of the membrane; it reads RERRELARRK…TGERTAPPVP (261 aa). Disordered regions lie at residues 656-675, 697-717, and 759-887; these read LGER…GGPG, HGGP…TPLP, and APEQ…PPVP. The span at 662–674 shows a compositional bias: gly residues; it reads TGTGGRGGAGGGP. Position 667 is an omega-N-methylarginine (Arg667). The span at 707–717 shows a compositional bias: low complexity; the sequence is LLPTPEQTPLP.

This sequence belongs to the semaphorin family.

The protein localises to the cell membrane. Functionally, functions as a cell surface repellent for mossy fibers of developing neurons in the hippocampus where it plays a role in axon guidance. May function through the PLXNA4 receptor expressed by mossy cell axons. In Rattus norvegicus (Rat), this protein is Semaphorin-6B (Sema6b).